The following is a 111-amino-acid chain: Resistin-like alpha (111 aa).

The signal sequence occupies residues 1–23; sequence MKTTTCSLLICISLLQLMVPVNT. Intrachain disulfides connect Cys-55/Cys-108, Cys-67/Cys-107, Cys-76/Cys-93, Cys-78/Cys-95, and Cys-82/Cys-97.

Belongs to the resistin/FIZZ family. In terms of assembly, monomer. As to expression, highest levels in adipose tissue.

The protein localises to the secreted. Its function is as follows. Probable hormone. Plays a role in pulmonary vascular remodeling. The polypeptide is Resistin-like alpha (Retnla) (Mus musculus (Mouse)).